The sequence spans 352 residues: Ion-translocating oxidoreductase complex subunit D (352 aa).

5 helical membrane-spanning segments follow: residues 20-40 (IMLLVLLAAVPGIAAQLWFFG), 42-62 (GTLVQILLASVSALLAEALVL), 78-109 (ALLTGLLLAVSIPPLAPWWMVVLGTVFAVIIA), 123-143 (PAMIGYVVLLISFPVQMTSWL), and 148-168 (IAVNIPGFIDAIQVIFSGHTA). Threonine 187 is subject to FMN phosphoryl threonine. The next 5 helical transmembrane spans lie at 214-234 (ILAGAGWQWVNLAWLAGGVWL), 242-262 (WHIPLSFLVTLALCAMLGWLF), 267-287 (LAAPQIHLLSGATMLGAFFIL), 301-321 (LIFGALAGLLVWLIRSFGGYP), and 322-342 (DGVAFAVLLANITVPLIDYYT).

This sequence belongs to the NqrB/RnfD family. As to quaternary structure, the complex is composed of six subunits: RsxA, RsxB, RsxC, RsxD, RsxE and RsxG. The cofactor is FMN.

The protein resides in the cell inner membrane. Its function is as follows. Part of a membrane-bound complex that couples electron transfer with translocation of ions across the membrane. Required to maintain the reduced state of SoxR. Probably transfers electron from NAD(P)H to SoxR. The chain is Ion-translocating oxidoreductase complex subunit D from Escherichia coli (strain K12).